The sequence spans 203 residues: A-type ATP synthase subunit E (203 aa).

This sequence belongs to the V-ATPase E subunit family. In terms of assembly, has multiple subunits with at least A(3), B(3), C, D, E, F, H, I and proteolipid K(x).

It localises to the cell membrane. Its function is as follows. Component of the A-type ATP synthase that produces ATP from ADP in the presence of a proton gradient across the membrane. In Methanococcus maripaludis (strain C7 / ATCC BAA-1331), this protein is A-type ATP synthase subunit E.